Here is a 344-residue protein sequence, read N- to C-terminus: Dihydroorotase (344 aa).

Zn(2+)-binding residues include His-13 and His-15. Substrate is bound by residues His-15–Arg-17 and Asn-41. Zn(2+) contacts are provided by Lys-99, His-136, and His-174. Lys-99 is subject to N6-carboxylysine. His-136 lines the substrate pocket. Leu-219 is a binding site for substrate. Asp-247 provides a ligand contact to Zn(2+). Asp-247 is an active-site residue. 2 residues coordinate substrate: His-251 and Ala-263.

The protein belongs to the metallo-dependent hydrolases superfamily. DHOase family. Class II DHOase subfamily. Homodimer. The cofactor is Zn(2+).

The catalysed reaction is (S)-dihydroorotate + H2O = N-carbamoyl-L-aspartate + H(+). Its pathway is pyrimidine metabolism; UMP biosynthesis via de novo pathway; (S)-dihydroorotate from bicarbonate: step 3/3. In terms of biological role, catalyzes the reversible cyclization of carbamoyl aspartate to dihydroorotate. The protein is Dihydroorotase of Microcystis aeruginosa (strain NIES-843 / IAM M-2473).